The primary structure comprises 98 residues: Large ribosomal subunit protein uL23 (98 aa).

The protein belongs to the universal ribosomal protein uL23 family. Part of the 50S ribosomal subunit. Contacts protein L29, and trigger factor when it is bound to the ribosome.

Its function is as follows. One of the early assembly proteins it binds 23S rRNA. One of the proteins that surrounds the polypeptide exit tunnel on the outside of the ribosome. Forms the main docking site for trigger factor binding to the ribosome. The chain is Large ribosomal subunit protein uL23 from Borrelia garinii subsp. bavariensis (strain ATCC BAA-2496 / DSM 23469 / PBi) (Borreliella bavariensis).